We begin with the raw amino-acid sequence, 713 residues long: B3 domain-containing transcription factor VAL3 (713 aa).

Positions F328–S427 form a DNA-binding region, TF-B3. Disordered regions lie at residues V459 to Q478 and L616 to M713. Over residues G464–R477 the composition is skewed to basic residues. Positions L616 to S629 are enriched in polar residues. Over residues T663–V674 the composition is skewed to basic and acidic residues. The span at S676 to S688 shows a compositional bias: low complexity. The span at N690–T700 shows a compositional bias: basic and acidic residues. Low complexity predominate over residues T701–M713.

The protein localises to the nucleus. Its function is as follows. May be involved in plant development. The sequence is that of B3 domain-containing transcription factor VAL3 (VAL3) from Arabidopsis thaliana (Mouse-ear cress).